A 146-amino-acid polypeptide reads, in one-letter code: Ecotin-like protein 1 (146 aa).

This sequence belongs to the protease inhibitor I11 (ecotin) family.

The sequence is that of Ecotin-like protein 1 (ISP1) from Leishmania braziliensis.